The primary structure comprises 591 residues: Parathyroid hormone/parathyroid hormone-related peptide receptor (591 aa).

Positions 1 to 26 (MGAARIAPSLALLLCCPVLSSAYALV) are cleaved as a signal peptide. Topologically, residues 27–188 (DADDVFTKEE…REREVFDRLG (162 aa)) are extracellular. Cystine bridges form between Cys-48-Cys-117, Cys-108-Cys-148, and Cys-131-Cys-170. The segment at 67–104 (KGWTPASTSGKPRKEKASGKFYPESKENKDVPTGSRRR) is disordered. A compositionally biased stretch (basic and acidic residues) spans 81 to 96 (EKASGKFYPESKENKD). Residues Asn-151, Asn-161, Asn-166, and Asn-176 are each glycosylated (N-linked (GlcNAc...) asparagine). Residues 189–212 (MIYTVGYSMSLASLTVAVLILAYF) form a helical membrane-spanning segment. Residues 213–219 (RRLHCTR) are Cytoplasmic-facing. A helical membrane pass occupies residues 220-239 (NYIHMHMFLSFMLRAASIFV). The Extracellular portion of the chain corresponds to 240 to 282 (KDAVLYSGFTLDEAERLTEEELHIIAQVPPPPAAAAVGYAGCR). The chain crosses the membrane as a helical span at residues 283–306 (VAVTFFLYFLATNYYWILVEGLYL). At 307–320 (HSLIFMAFFSEKKY) the chain is on the cytoplasmic side. A helical membrane pass occupies residues 321-342 (LWGFTIFGWGLPAVFVAVWVGV). Residues 343-361 (RATLANTGCWDLSSGHKKW) are Extracellular-facing. A helical transmembrane segment spans residues 362–382 (IIQVPILASVVLNFILFINII). Residues 383-409 (RVLATKLRETNAGRCDTRQQYRKLLRS) lie on the Cytoplasmic side of the membrane. A helical membrane pass occupies residues 410–428 (TLVLVPLFGVHYTVFMALP). Residues 429–440 (YTEVSGTLWQIQ) are Extracellular-facing. Residues 441–463 (MHYEMLFNSFQGFFVAIIYCFCN) form a helical membrane-spanning segment. Residues 464–591 (GEVQAEIRKS…LLQEEWETVM (128 aa)) are Cytoplasmic-facing. The Important for interaction with G proteins motif lies at 474–477 (WSRW). The tract at residues 516-544 (LPLSPRLPPATTNGHSQLPGHAKPGAPAT) is disordered.

It belongs to the G-protein coupled receptor 2 family. Homodimer in the absence of bound ligand. Peptide hormone binding leads to dissociation of the homodimer. N-glycosylated.

Its subcellular location is the cell membrane. Functionally, G-protein-coupled receptor for parathyroid hormone (PTH) and for parathyroid hormone-related peptide (PTHLH). Ligand binding causes a conformation change that triggers signaling via guanine nucleotide-binding proteins (G proteins) and modulates the activity of downstream effectors, such as adenylate cyclase (cAMP). PTH1R is coupled to G(s) G alpha proteins and mediates activation of adenylate cyclase activity. PTHLH dissociates from PTH1R more rapidly than PTH; as consequence, the cAMP response induced by PTHLH decays faster than the response induced by PTH. This Rattus norvegicus (Rat) protein is Parathyroid hormone/parathyroid hormone-related peptide receptor (Pth1r).